Consider the following 374-residue polypeptide: Putative G-protein coupled receptor-like protein B0244.6 (374 aa).

Residues 1–54 (MTQNHYTTSIFANCSKHYEFEILLETCTNSTNPCHAVSQIQSAITIAYVDYYTS) lie on the Extracellular side of the membrane. Residues 55-75 (VALFSIAALLDIYCLIITIPL) form a helical membrane-spanning segment. Topologically, residues 76–86 (YRRMKDDSKKK) are cytoplasmic. Residues 87-107 (YVFLITRCISGLLLVVAWLLI) form a helical membrane-spanning segment. Residues 108–137 (QCIYLRFIAPSQDNLPYYVLALALNIGSTY) are Extracellular-facing. A helical transmembrane segment spans residues 138-158 (VLLGSYVGMAGILYLGVLNPI). Topologically, residues 159–169 (AFNQHLTLRIV) are cytoplasmic. Residues 170–190 (YIAVCIIFVISIFISIPLAIF) form a helical membrane-spanning segment. Topologically, residues 191–216 (QALMTVPTSSMSCTDTACAPLITLIN) are extracellular. The chain crosses the membrane as a helical span at residues 217 to 237 (FVLVFGSLITTTLTLTFVLIS). Over 238–262 (LCRHRKEFKKLDTTSNTSLNSAVRL) the chain is Cytoplasmic. A helical membrane pass occupies residues 263-283 (LKFTLFAVLLLVAAEVIPFVI). Over 284 to 304 (SETKKKHSVVTGCYYFYHSGK) the chain is Extracellular. A helical membrane pass occupies residues 305 to 325 (VIQYAVFALTESSIWSIALII). The Cytoplasmic portion of the chain corresponds to 326-374 (DPLINIIFDRTVSKKATDQVKWMRKSCVGLVRKVTKRSNPENFTETSEI).

It belongs to the G-protein coupled receptor 1 family. B0244 subfamily.

It localises to the cell membrane. This chain is Putative G-protein coupled receptor-like protein B0244.6, found in Caenorhabditis elegans.